A 200-amino-acid chain; its full sequence is Large ribosomal subunit protein uL4 (200 aa).

A disordered region spans residues 42–65; it reads TRAQKTRSEVSGGGAKPWRQKGTG.

This sequence belongs to the universal ribosomal protein uL4 family. In terms of assembly, part of the 50S ribosomal subunit.

Its function is as follows. One of the primary rRNA binding proteins, this protein initially binds near the 5'-end of the 23S rRNA. It is important during the early stages of 50S assembly. It makes multiple contacts with different domains of the 23S rRNA in the assembled 50S subunit and ribosome. Functionally, forms part of the polypeptide exit tunnel. This chain is Large ribosomal subunit protein uL4, found in Vibrio atlanticus (strain LGP32) (Vibrio splendidus (strain Mel32)).